The following is a 336-amino-acid chain: tRNA N6-adenosine threonylcarbamoyltransferase (336 aa).

Residues histidine 114 and histidine 118 each coordinate Fe cation. Residues 136 to 140, aspartate 169, glycine 182, aspartate 186, and asparagine 275 each bind substrate; that span reads LVSGG. Aspartate 301 serves as a coordination point for Fe cation.

Belongs to the KAE1 / TsaD family. Fe(2+) is required as a cofactor.

The protein resides in the cytoplasm. The catalysed reaction is L-threonylcarbamoyladenylate + adenosine(37) in tRNA = N(6)-L-threonylcarbamoyladenosine(37) in tRNA + AMP + H(+). In terms of biological role, required for the formation of a threonylcarbamoyl group on adenosine at position 37 (t(6)A37) in tRNAs that read codons beginning with adenine. Is involved in the transfer of the threonylcarbamoyl moiety of threonylcarbamoyl-AMP (TC-AMP) to the N6 group of A37, together with TsaE and TsaB. TsaD likely plays a direct catalytic role in this reaction. In Streptococcus pneumoniae (strain ATCC 700669 / Spain 23F-1), this protein is tRNA N6-adenosine threonylcarbamoyltransferase.